Here is a 255-residue protein sequence, read N- to C-terminus: Myb-related protein Zm38 (255 aa).

HTH myb-type domains are found at residues 9–61 (KAHT…INYL) and 62–116 (RPDL…RRKL). DNA-binding regions (H-T-H motif) lie at residues 37-61 (WRSL…INYL) and 89-112 (WSLI…NTHV).

It localises to the nucleus. Functionally, transcription factor that negatively regulates genes involved in anthocyanin biosynthesis. In Zea mays (Maize), this protein is Myb-related protein Zm38.